Here is a 265-residue protein sequence, read N- to C-terminus: AT-hook motif nuclear-localized protein 18 (265 aa).

The disordered stretch occupies residues 1–75 (MDEVSRSHTP…AGSKNKPKAP (75 aa)). Positions 19–30 (HYHHQNAGRQKR) are enriched in basic residues. The a.T hook DNA-binding region spans 59–71 (RRPRGRPAGSKNK). Residues 83–217 (ANAFRCHVME…EEEETEREID (135 aa)) form the PPC domain.

The protein localises to the nucleus. Its function is as follows. Transcription factor that specifically binds AT-rich DNA sequences related to the nuclear matrix attachment regions (MARs). Acts redundantly with AHL22, AHL27 and AHL29 in the regulation of flowering and regulation of the hypocotyl elongation. This Arabidopsis thaliana (Mouse-ear cress) protein is AT-hook motif nuclear-localized protein 18.